The primary structure comprises 1291 residues: DNA-directed RNA polymerase subunit beta' (1291 aa).

Residues Cys-60, Cys-62, Cys-75, and Cys-78 each contribute to the Zn(2+) site. Mg(2+)-binding residues include Asp-535, Asp-537, and Asp-539. Residues Cys-878, Cys-954, Cys-961, and Cys-964 each coordinate Zn(2+).

The protein belongs to the RNA polymerase beta' chain family. In terms of assembly, the RNAP catalytic core consists of 2 alpha, 1 beta, 1 beta' and 1 omega subunit. When a sigma factor is associated with the core the holoenzyme is formed, which can initiate transcription. Requires Mg(2+) as cofactor. The cofactor is Zn(2+).

It carries out the reaction RNA(n) + a ribonucleoside 5'-triphosphate = RNA(n+1) + diphosphate. DNA-dependent RNA polymerase catalyzes the transcription of DNA into RNA using the four ribonucleoside triphosphates as substrates. The sequence is that of DNA-directed RNA polymerase subunit beta' from Thermobifida fusca (strain YX).